The primary structure comprises 55 residues: MVKGTTSMGGFTRKHVHIRCRRCGKNSYHKRHHRCSSCGFPDAKIRKYSWVKWYT.

The Zn(2+) site is built by C20, C23, C35, and C38. The segment at 20-38 (CRRCGKNSYHKRHHRCSSC) adopts a C4-type zinc-finger fold.

The protein belongs to the eukaryotic ribosomal protein eL37 family. Zn(2+) is required as a cofactor.

Its function is as follows. Binds to the 23S rRNA. This Cenarchaeum symbiosum (strain A) protein is Large ribosomal subunit protein eL37.